Here is a 217-residue protein sequence, read N- to C-terminus: MPKKFQGENTKSAVARARKAEAKAVSDGKRQKEIEDAYWQDDDKHVARKGQRKEDKEKKRLEQLERKKESQRLLDEEDSKMKAKPTKPAAPSKVTRAEIEETLCKEEEHKATTEKPKTHLEMPLEENVNRRVLEEGEVEARTVEDAIAALSVGKELDRHPERRMKAAFAAFEEINMPLLKQENPNMRLSQLKHLLKKEWMKSPENPMNQQHAMYNSH.

Residues 1–128 are disordered; sequence MPKKFQGENT…HLEMPLEENV (128 aa). Composition is skewed to basic and acidic residues over residues 18 to 45, 52 to 74, and 95 to 128; these read RKAE…DDKH, RKED…QRLL, and TRAE…EENV. Residues 46–82 adopt a coiled-coil conformation; it reads VARKGQRKEDKEKKRLEQLERKKESQRLLDEEDSKMK.

The protein belongs to the CCDC124 family. In terms of assembly, associates with translationally inactive ribosomes in the nonrotated state.

Its subcellular location is the cytoplasm. It is found in the cytoskeleton. It localises to the microtubule organizing center. The protein localises to the centrosome. The protein resides in the midbody. Ribosome-binding protein involved in ribosome hibernation: associates with translationally inactive ribosomes and stabilizes the nonrotated conformation of the 80S ribosome, thereby promoting ribosome preservation and storage. The sequence is that of Coiled-coil domain-containing protein 124-A (ccdc124-a) from Xenopus laevis (African clawed frog).